The following is a 371-amino-acid chain: uncharacterized protein (371 aa).

The protein to E.coli YcjY.

This is an uncharacterized protein from Pseudomonas aeruginosa (strain ATCC 15692 / DSM 22644 / CIP 104116 / JCM 14847 / LMG 12228 / 1C / PRS 101 / PAO1).